We begin with the raw amino-acid sequence, 304 residues long: 17-beta-hydroxysteroid dehydrogenase 13 (304 aa).

The N-terminal stretch at 1–19 (MNLILEFLLLVGVIIYSYL) is a signal peptide. Phosphoserine is present on Ser33. 40 to 67 (LITGAGHGIGRLTAYEFAKQKSRLVLWD) is an NAD(+) binding site. Position 79 is an N6-acetyllysine (Lys79). Ser172 provides a ligand contact to substrate. Tyr185 serves as the catalytic Proton acceptor. Position 189 (Lys189) interacts with NAD(+). Residues 276-304 (SSKHPHGGSQQPVTPIPGDLTPSSDFLKH) are disordered.

The protein belongs to the short-chain dehydrogenases/reductases (SDR) family. As to expression, expressed predominantly in the liver (at protein level).

The protein resides in the lipid droplet. Its subcellular location is the endoplasmic reticulum. It catalyses the reaction 17beta-estradiol + NAD(+) = estrone + NADH + H(+). The catalysed reaction is all-trans-retinol + NAD(+) = all-trans-retinal + NADH + H(+). It carries out the reaction all-trans-retinal + NAD(+) + H2O = all-trans-retinoate + NADH + 2 H(+). Its function is as follows. Plays a pivotal role in hepatic lipid metabolism. In vitro, it catalyzes the oxidation of a variety of lipid substrates, including 17beta-estradiol, retinol, retinal, and leukotriene B4. This chain is 17-beta-hydroxysteroid dehydrogenase 13 (Hsd17b13), found in Mus musculus (Mouse).